Consider the following 431-residue polypeptide: Islet cell autoantigen 1-like protein (431 aa).

The region spanning 44-247 is the AH domain; the sequence is ASDAELDAKL…TAQMMTQIQE (204 aa). Disordered regions lie at residues 295–316 and 351–372; these read EEEEEERFEREPAVARALPRDS and CGSPCTGLTSQEPSVGPGSLTS. Positions 301–316 are enriched in basic and acidic residues; that stretch reads RFEREPAVARALPRDS. Polar residues predominate over residues 356–372; the sequence is TGLTSQEPSVGPGSLTS.

The protein is Islet cell autoantigen 1-like protein (Ica1l) of Mus musculus (Mouse).